A 598-amino-acid polypeptide reads, in one-letter code: Probable translation initiation factor IF-2 (598 aa).

The region spanning 3–225 is the tr-type G domain; sequence LRCPIVSVLG…GLAQKFLEQK (223 aa). A G1 region spans residues 12–19; that stretch reads GHVDHGKT. Residue 12-19 coordinates GTP; sequence GHVDHGKT. The tract at residues 37-41 is G2; it reads GITQH. Residues 76-79 form a G3 region; that stretch reads DTPG. Residues 76–80 and 130–133 each bind GTP; these read DTPGH and NKVD. Positions 130–133 are G4; that stretch reads NKVD. The tract at residues 200–202 is G5; sequence SAM.

It belongs to the TRAFAC class translation factor GTPase superfamily. Classic translation factor GTPase family. IF-2 subfamily.

Functionally, function in general translation initiation by promoting the binding of the formylmethionine-tRNA to ribosomes. Seems to function along with eIF-2. The protein is Probable translation initiation factor IF-2 of Methanococcus maripaludis (strain C7 / ATCC BAA-1331).